The sequence spans 944 residues: Translation initiation factor IF-2 (944 aa).

2 disordered regions span residues 61–157 and 173–281; these read IQAN…KAKQ and TQSN…SHKI. Positions 132 to 150 are enriched in polar residues; that stretch reads TFENQTPPTENTPKVVSHS. Positions 175–185 are enriched in low complexity; sequence SNANNASNANN. Residues 186–203 show a composition bias toward basic and acidic residues; sequence AKKEISEVKKQEQEIKRH. The span at 204-215 shows a compositional bias: basic residues; the sequence is ENIKRRTGFRVI. Basic and acidic residues predominate over residues 244 to 259; the sequence is EDIKKEWQEKDKQEAK. The 170-residue stretch at 443 to 612 folds into the tr-type G domain; sequence ERPPVVTIMG…LIQAGIMELK (170 aa). Residues 452–459 are G1; that stretch reads GHVDHGKT. A GTP-binding site is contributed by 452–459; it reads GHVDHGKT. The G2 stretch occupies residues 477–481; it reads GITQH. Positions 498–501 are G3; sequence DTPG. Residues 498–502 and 552–555 contribute to the GTP site; these read DTPGH and NKMD. Residues 552-555 are G4; the sequence is NKMD. Residues 588 to 590 form a G5 region; it reads SAK.

The protein belongs to the TRAFAC class translation factor GTPase superfamily. Classic translation factor GTPase family. IF-2 subfamily.

The protein resides in the cytoplasm. Its function is as follows. One of the essential components for the initiation of protein synthesis. Protects formylmethionyl-tRNA from spontaneous hydrolysis and promotes its binding to the 30S ribosomal subunits. Also involved in the hydrolysis of GTP during the formation of the 70S ribosomal complex. In Helicobacter pylori (strain ATCC 700392 / 26695) (Campylobacter pylori), this protein is Translation initiation factor IF-2 (infB).